The following is a 466-amino-acid chain: Arginine biosynthesis bifunctional protein ArgJ, mitochondrial (466 aa).

Substrate contacts are provided by Thr194, Lys223, Thr234, Glu321, Asn461, and Thr466. Residue Thr234 is the Nucleophile of the active site.

This sequence belongs to the ArgJ family. As to quaternary structure, heterodimer of an alpha and a beta chain. In terms of processing, the alpha and beta chains are autoproteolytically processed from a single precursor protein within the mitochondrion.

The protein resides in the mitochondrion matrix. The enzyme catalyses N(2)-acetyl-L-ornithine + L-glutamate = N-acetyl-L-glutamate + L-ornithine. The catalysed reaction is L-glutamate + acetyl-CoA = N-acetyl-L-glutamate + CoA + H(+). It participates in amino-acid biosynthesis; L-arginine biosynthesis; L-ornithine and N-acetyl-L-glutamate from L-glutamate and N(2)-acetyl-L-ornithine (cyclic): step 1/1. The protein operates within amino-acid biosynthesis; L-arginine biosynthesis; N(2)-acetyl-L-ornithine from L-glutamate: step 1/4. Functionally, catalyzes two activities which are involved in the cyclic version of arginine biosynthesis: the synthesis of acetylglutamate from glutamate and acetyl-CoA, and of ornithine by transacetylation between acetylornithine and glutamate. This is Arginine biosynthesis bifunctional protein ArgJ, mitochondrial from Aspergillus flavus (strain ATCC 200026 / FGSC A1120 / IAM 13836 / NRRL 3357 / JCM 12722 / SRRC 167).